Here is a 136-residue protein sequence, read N- to C-terminus: Protein NrdI (136 aa).

This sequence belongs to the NrdI family.

Probably involved in ribonucleotide reductase function. The polypeptide is Protein NrdI (Enterobacter sp. (strain 638)).